The following is a 251-amino-acid chain: uncharacterized protein (251 aa).

Position 36 to 43 (36 to 43 (GKQGTGKT)) interacts with ATP. Positions 230 to 251 (SDNKTENPSNPSLLTKIDDVTR) are disordered.

Its function is as follows. This protein may be involved in virus assembly. Essential for virus function. This is an uncharacterized protein from Sulfolobus spindle-shape virus 1 (SSV1).